Consider the following 131-residue polypeptide: Synaptobrevin-like protein (131 aa).

Over 1–81 the chain is Cytoplasmic; the sequence is MLHITTMTDK…KRKFWWKNCK (81 aa). Positions 18–78 constitute a v-SNARE coiled-coil homology domain; sequence RLQQTQAQVN…GKLKRKFWWK (61 aa). A helical; Anchor for type IV membrane protein transmembrane segment spans residues 82-102; that stretch reads MLAVLGVLVVILIIVLIVWVV. Residues 103–131 are Vesicular-facing; sequence SEQKNKVEQSEHSSHHLVMDNSSHLLSEQ. A disordered region spans residues 112–131; it reads SEHSSHHLVMDNSSHLLSEQ. Polar residues predominate over residues 122 to 131; it reads DNSSHLLSEQ.

The protein belongs to the synaptobrevin family.

It is found in the cytoplasmic vesicle. Its subcellular location is the secretory vesicle. The protein resides in the synaptic vesicle membrane. The protein localises to the synapse. It localises to the synaptosome. Its function is as follows. Unknown, but synaptobrevins are presumed to be involved in targeting and fusion of synaptic vesicles with the presynaptic membrane as well as in neurotransmitter release. The chain is Synaptobrevin-like protein from Schistosoma mansoni (Blood fluke).